Consider the following 104-residue polypeptide: Pyrimidine/purine nucleoside phosphorylase (104 aa).

It belongs to the nucleoside phosphorylase PpnP family.

It catalyses the reaction a purine D-ribonucleoside + phosphate = a purine nucleobase + alpha-D-ribose 1-phosphate. It carries out the reaction adenosine + phosphate = alpha-D-ribose 1-phosphate + adenine. The catalysed reaction is cytidine + phosphate = cytosine + alpha-D-ribose 1-phosphate. The enzyme catalyses guanosine + phosphate = alpha-D-ribose 1-phosphate + guanine. It catalyses the reaction inosine + phosphate = alpha-D-ribose 1-phosphate + hypoxanthine. It carries out the reaction thymidine + phosphate = 2-deoxy-alpha-D-ribose 1-phosphate + thymine. The catalysed reaction is uridine + phosphate = alpha-D-ribose 1-phosphate + uracil. The enzyme catalyses xanthosine + phosphate = alpha-D-ribose 1-phosphate + xanthine. Catalyzes the phosphorolysis of diverse nucleosides, yielding D-ribose 1-phosphate and the respective free bases. Can use uridine, adenosine, guanosine, cytidine, thymidine, inosine and xanthosine as substrates. Also catalyzes the reverse reactions. The polypeptide is Pyrimidine/purine nucleoside phosphorylase (Leptospira borgpetersenii serovar Hardjo-bovis (strain L550)).